Consider the following 309-residue polypeptide: Elongation factor Ts (309 aa).

The tract at residues 82 to 85 is involved in Mg(2+) ion dislocation from EF-Tu; sequence TDFV.

Belongs to the EF-Ts family.

Its subcellular location is the cytoplasm. Functionally, associates with the EF-Tu.GDP complex and induces the exchange of GDP to GTP. It remains bound to the aminoacyl-tRNA.EF-Tu.GTP complex up to the GTP hydrolysis stage on the ribosome. This is Elongation factor Ts from Rickettsia typhi (strain ATCC VR-144 / Wilmington).